The chain runs to 159 residues: Ribosomal RNA large subunit methyltransferase H (159 aa).

S-adenosyl-L-methionine contacts are provided by residues leucine 76, glycine 108, and 127-132 (FSNMTF).

It belongs to the RNA methyltransferase RlmH family. As to quaternary structure, homodimer.

It localises to the cytoplasm. The catalysed reaction is pseudouridine(1915) in 23S rRNA + S-adenosyl-L-methionine = N(3)-methylpseudouridine(1915) in 23S rRNA + S-adenosyl-L-homocysteine + H(+). Specifically methylates the pseudouridine at position 1915 (m3Psi1915) in 23S rRNA. The sequence is that of Ribosomal RNA large subunit methyltransferase H from Staphylococcus epidermidis (strain ATCC 35984 / DSM 28319 / BCRC 17069 / CCUG 31568 / BM 3577 / RP62A).